A 102-amino-acid polypeptide reads, in one-letter code: uncharacterized protein (102 aa).

2 consecutive transmembrane segments (helical) span residues 28-48 (YLNL…LISI) and 81-101 (LSVL…AGIG).

The protein resides in the membrane. This is an uncharacterized protein from Saccharomyces cerevisiae (strain ATCC 204508 / S288c) (Baker's yeast).